The chain runs to 1024 residues: MNFIRNNRRALIQRMGLTVTKQICDDLFALNVLNNQEANVIYCEPLEQEAARKIIHMTMQKGSAACNLFLKSLENWDYFVYQDLTGQNLSYQVTEEDLNVLAQNLKDLYNSPAFLNFYPLGEDIDIIFNLEKTFTEPIMWKKDHRHHRVEQLTLGSLLEALKSPCLIEGESGKGKSTLLQRIAMLWASGGCRALKGFRLVFFIHLRSARGGLFETLYDQLLNIPDFISKPTFKALLLKLHKEVLFLLDGYNEFHPQNCPEIEALIKENHRFKNMVIVTTTTECLRHIRHVGALTAEVGDMTEDSAKDLIEAVLVPDQVERLWAQIQESRCLRNLMKTPLFVVITCAIQMGRQEFQAHTQTMLFQTFYDLLIQKNSHRYRGGASGDFARSLDYCGDLALEGVFAHKFDFEPEHGSSMNEDVLVTIGLLCKYTAQRLKPTYKFFHKSFQEYTAGRRLSSLLTSKEPEEVSKGNSYLNKMVSISDITSLYGNLLLYTCGSSTEATRAVMRHLAMVYQHGSLQGLSVTKRPLWRQESIQSLRNTTEQDVLKAINVNSFVECGINLFSESMSKSDLSQEFEAFFQGKSLYINSENIPDYLFDFFEYLPNCASALDFVKLDFYERATESQDKAEENVPGVHTEGPSETYIPPRAVSLFFNWKQEFKTLEVTLRDINKLNKQDIKYLGKIFSSATNLRLHIKRCAAMAGRLSSVLRTCKNMHTLMVEASPLTTDDEQYITSVTGLQNLSIHRLHTQQLPGGLIDSLGNLKNLERLILDDIRMNEEDAKNLAEGLRSLKKMRLLHLTHLSDIGEGMDYIVKSLSEESCDLQEMKLVACCLTANSVKVLAQNLHNLIKLSILDISENYLEKDGNEALQELIGRLGVLGELTTLMLPWCWDVHTSLPKLLKQLEGTPGLAKLGLKNWRLRDEEIKSLGEFLEMNPLRDLQQLDLAGHCVSSDGWLYFMNVFENLKQLVFFDFSTEEFLPDAALVRKLSQVLSKLTLLQEVKLTGWEFDDYDISAIKGTFKLVTA.

Positions 1–88 (MNFIRNNRRA…FVYQDLTGQN (88 aa)) constitute a CARD domain. Residues 95 to 298 (EEDLNVLAQN…HVGALTAEVG (204 aa)) are nucleotide-binding domain (NBD). ATP is bound by residues T135, 172-177 (GKGKST), and H443. The 314-residue stretch at 163-476 (SPCLIEGESG…VSKGNSYLNK (314 aa)) folds into the NACHT domain. Residues 356-463 (AHTQTMLFQT…RLSSLLTSKE (108 aa)) are winged-helix domain (WHD). S533 carries the post-translational modification Phosphoserine. LRR repeat units lie at residues 578–598 (FFQGKSLYINSENIPDYLFDF), 656–679 (KQEFKTLEVTLRDINKLNKQDIKY), 735–758 (VTGLQNLSIHRLHTQQLPGGLIDS), 762–785 (LKNLERLILDDIRMNEEDAKNLAE), 787–812 (LRSLKKMRLLHLTHLSDIGEGMDYIV), 824–847 (EMKLVACCLTANSVKVLAQNLHNL), 848–870 (IKLSILDISENYLEKDGNEALQE), 878–902 (LGELTTLMLPWCWDVHTSLPKLLKQ), 911–933 (KLGLKNWRLRDEEIKSLGEFLEM), 936–963 (LRDLQQLDLAGHCVSSDGWLYFMNVFEN), 965–985 (KQLVFFDFSTEEFLPDAALVR), and 999–1021 (EVKLTGWEFDDYDISAIKGTFKL).

As to quaternary structure, homooligomer; homooligomerizes following activation of Naip proteins by pathogenic proteins such as S.typhimurium (Salmonella) flagellin or PrgJ. Component of the NLRC4 inflammasome, at least composed of NLRC4, caspase-1 (CASP1) and some NAIP protein (Naip, Naip2 or Naip5). Interacts with Naip5 and Naip6; following Naip5 and Naip6 engagement by Salmonella flagellin. Interacts with Naip2; following Naip2 engagement by Salmonella PrgJ. The inflammasome is a huge complex that contains multiple copies of NLRC4 and a single Naip protein chain. Some NLRC4 inflammasomes contain PYCARD/ASC, while some others directly contact and activate CASP1. Interacts with EIF2AK2/PKR. In terms of processing, phosphorylated at Ser-533 following infection of macrophages with S.typhimurium (Salmonella). Phosphorylation is essential for NLRC4 inflammasome function to promote caspase-1 activation and pyroptosis. PRKCD phosphorylates Ser-533 in vitro. Expressed by intestinal mononuclear phagocytes.

The protein localises to the cytoplasm. It is found in the cytosol. The protein resides in the inflammasome. Its function is as follows. Key component of inflammasomes that indirectly senses specific proteins from pathogenic bacteria and fungi and responds by assembling an inflammasome complex that promotes caspase-1 activation, cytokine production and macrophage pyroptosis. The NLRC4 inflammasome is activated as part of the innate immune response to a range of intracellular bacteria. It senses pathogenic proteins of the type III secretion system (T3SS) and type IV secretion system (T4SS) such as flagellin and PrgJ-like rod proteins via the Naip proteins (Naip1, Naip2 or Naip5): specific Naip proteins recognize and bind pathogenic proteins, driving assembly and activation of the NLRC4 inflammasome. The NLRC4 inflammasome senses Gram-negative bacteria such as L.pneumophila and P.aeruginosa, enteric pathogens S.typhimurium (Salmonella) and S.flexneri and fungal pathogen C.albicans. In intestine, the NLRC4 inflammasome is able to discriminate between commensal and pathogenic bacteria and specifically drives production of interleukin-1 beta (IL1B) in response to infection by Salmonella or P.aeruginosa. In case of L.pneumophila infection the inflammasome acts by activating caspase-7. The sequence is that of NLR family CARD domain-containing protein 4 (Nlrc4) from Mus musculus (Mouse).